A 1535-amino-acid chain; its full sequence is Protein artichoke (1535 aa).

The signal sequence occupies residues methionine 1–alanine 19. LRR repeat units lie at residues lysine 64–serine 87, glutamine 89–glutamate 110, glutamate 112–glycine 135, methionine 136–glycine 157, leucine 158–histidine 181, proline 183–glycine 206, leucine 207–arginine 230, leucine 231–aspartate 256, leucine 257–aspartate 280, leucine 281–arginine 304, proline 306–glutamine 328, glycine 331–alanine 356, leucine 357–glycine 380, glycine 382–alanine 404, proline 406–leucine 429, proline 430–glycine 452, leucine 453–histidine 476, proline 478–histidine 500, leucine 521–aspartate 545, leucine 548–glycine 571, methionine 573–glycine 595, glutamine 597–proline 619, leucine 620–asparagine 643, serine 645–threonine 667, arginine 669–leucine 691, asparagine 692–glycine 714, arginine 716–asparagine 738, leucine 739–glycine 762, aspartate 764–glutamate 786, proline 788–asparagine 810, alanine 811–serine 834, methionine 835–alanine 858, asparagine 860–threonine 882, and methionine 883–asparagine 906. One can recognise an LRRCT domain in the interval asparagine 919 to valine 963. Disordered stretches follow at residues histidine 1036–isoleucine 1055, threonine 1253–tyrosine 1331, valine 1377–threonine 1416, and alanine 1429–alanine 1449. The span at threonine 1253–alanine 1270 shows a compositional bias: polar residues. 2 stretches are compositionally biased toward low complexity: residues threonine 1271–threonine 1285 and threonine 1293–threonine 1315. 2 stretches are compositionally biased toward polar residues: residues proline 1316 to aspartate 1328 and valine 1377 to threonine 1391. A compositionally biased stretch (pro residues) spans threonine 1398–proline 1407.

It is found in the secreted. The protein localises to the extracellular space. Its subcellular location is the extracellular matrix. It localises to the cytoplasm. In terms of biological role, required for normal morphology and function of ciliated sensory organs. In Drosophila melanogaster (Fruit fly), this protein is Protein artichoke.